Here is a 263-residue protein sequence, read N- to C-terminus: Endonuclease 8 (263 aa).

Residue Pro2 is the Schiff-base intermediate with DNA of the active site. Glu3 acts as the Proton donor in catalysis. The active-site Proton donor; for beta-elimination activity is Lys53. DNA-binding residues include Gln70, Arg125, and Asn169. Residues 229–263 (KVFHRDGEACERCGGIIEKTTLSSRPFYWCPHCQK) form an FPG-type zinc finger. Residue Arg253 is the Proton donor; for delta-elimination activity of the active site.

The protein belongs to the FPG family. Requires Zn(2+) as cofactor.

The enzyme catalyses 2'-deoxyribonucleotide-(2'-deoxyribose 5'-phosphate)-2'-deoxyribonucleotide-DNA = a 3'-end 2'-deoxyribonucleotide-(2,3-dehydro-2,3-deoxyribose 5'-phosphate)-DNA + a 5'-end 5'-phospho-2'-deoxyribonucleoside-DNA + H(+). Functionally, involved in base excision repair of DNA damaged by oxidation or by mutagenic agents. Acts as a DNA glycosylase that recognizes and removes damaged bases. Has a preference for oxidized pyrimidines, such as thymine glycol, 5,6-dihydrouracil and 5,6-dihydrothymine. Has AP (apurinic/apyrimidinic) lyase activity and introduces nicks in the DNA strand. Cleaves the DNA backbone by beta-delta elimination to generate a single-strand break at the site of the removed base with both 3'- and 5'-phosphates. In Salmonella heidelberg (strain SL476), this protein is Endonuclease 8.